The primary structure comprises 538 residues: Protein phosphatase EYA2 (538 aa).

Polar residues predominate over residues 209-230 (HNVPNQSSESLAGEYNTHNGPS). Positions 209 to 263 (HNVPNQSSESLAGEYNTHNGPSTPAKEGDTDRPHRASDGKLRGRSKRSSDPSPAG) are disordered. A compositionally biased stretch (basic and acidic residues) spans 234–249 (KEGDTDRPHRASDGKL). Asp-274 functions as the Nucleophile in the catalytic mechanism. Positions 274, 276, and 502 each coordinate Mg(2+). Asp-276 serves as the catalytic Proton donor.

The protein belongs to the HAD-like hydrolase superfamily. EYA family. As to quaternary structure, interacts with DACH2 and SIX1, and probably with SIX2, SIX4 and SIX5. Interacts with CAPN8. Interacts with GNAZ and GNAI2; this precludes interaction with SIX1. It depends on Mg(2+) as a cofactor. In terms of tissue distribution, highest expression in muscle with lower levels in kidney, placenta, pancreas, brain and heart.

It is found in the cytoplasm. The protein localises to the nucleus. It carries out the reaction O-phospho-L-tyrosyl-[protein] + H2O = L-tyrosyl-[protein] + phosphate. In terms of biological role, functions both as protein phosphatase and as transcriptional coactivator for SIX1, and probably also for SIX2, SIX4 and SIX5. Tyrosine phosphatase that dephosphorylates 'Tyr-142' of histone H2AX (H2AXY142ph) and promotes efficient DNA repair via the recruitment of DNA repair complexes containing MDC1. 'Tyr-142' phosphorylation of histone H2AX plays a central role in DNA repair and acts as a mark that distinguishes between apoptotic and repair responses to genotoxic stress. Its function as histone phosphatase may contribute to its function in transcription regulation during organogenesis. Plays an important role in hypaxial muscle development together with SIX1 and DACH2; in this it is functionally redundant with EYA1. The sequence is that of Protein phosphatase EYA2 (EYA2) from Homo sapiens (Human).